The sequence spans 472 residues: Probable endopolygalacturonase D (472 aa).

The N-terminal stretch at M1 to A16 is a signal peptide. N-linked (GlcNAc...) asparagine glycosylation occurs at N24. An intrachain disulfide couples C129 to C144. PbH1 repeat units follow at residues M236 to H258, T259 to S297, and S298 to S319. N300 carries an N-linked (GlcNAc...) asparagine glycan. D312 (proton donor) is an active-site residue. A disulfide bridge links C314 with C330. H334 is an active-site residue. 4 PbH1 repeats span residues V349–S370, V378–Q400, T412–K433, and C444–D467. Residues N361, N385, and N419 are each glycosylated (N-linked (GlcNAc...) asparagine). Cystine bridges form between C439–C444 and C462–C469.

The protein belongs to the glycosyl hydrolase 28 family.

The protein resides in the secreted. It catalyses the reaction (1,4-alpha-D-galacturonosyl)n+m + H2O = (1,4-alpha-D-galacturonosyl)n + (1,4-alpha-D-galacturonosyl)m.. In terms of biological role, involved in maceration and soft-rotting of plant tissue. Hydrolyzes the 1,4-alpha glycosidic bonds of de-esterified pectate in the smooth region of the plant cell wall. This is Probable endopolygalacturonase D (pgaD) from Neosartorya fischeri (strain ATCC 1020 / DSM 3700 / CBS 544.65 / FGSC A1164 / JCM 1740 / NRRL 181 / WB 181) (Aspergillus fischerianus).